The following is a 527-amino-acid chain: Cytokinin dehydrogenase 3 (527 aa).

A signal peptide spans 1–22 (MEVAMVCTRVNLLILILSLCSP). The FAD-binding PCMH-type domain occupies 52–231 (LFHSPSAVLK…TRARILLQEA (180 aa)). Residues alanine 87, glycine 89, and glycine 91 each contribute to the FAD site. Position 92 is a pros-8alpha-FAD histidine (histidine 92). Residues serine 93, glutamine 97, aspartate 155, threonine 160, serine 166, isoleucine 170, and isoleucine 221 each contribute to the FAD site. Asparagine 413 is a glycosylation site (N-linked (GlcNAc...) asparagine). Residues tyrosine 471 and glutamine 509 each coordinate FAD.

It belongs to the oxygen-dependent FAD-linked oxidoreductase family. As to quaternary structure, monomer. FAD is required as a cofactor. In terms of tissue distribution, expressed in inflorescence meristems. Highly expressed in lamina joints, and mainly in the parenchyma cells and vascular bundles on the abaxial side of the lamina joint. Expressed in roots, stems, leaves and young panicles.

The protein localises to the endoplasmic reticulum. It catalyses the reaction N(6)-dimethylallyladenine + A + H2O = 3-methyl-2-butenal + adenine + AH2. In terms of biological role, catalyzes the oxidation of cytokinins, a family of N(6)-substituted adenine derivatives, where the substituent is an isopentenyl group. Cytokinins are plant hormones essential for plant growth, development, and stress responses. Exhibits specific activities toward trans-zeatin (tZ) and isopentenyladenine (iP). Plays a role in lamina joint inclination. Regulates cell proliferation and vascular bundle number on the abaxial side of lamina joint. The polypeptide is Cytokinin dehydrogenase 3 (Oryza sativa subsp. japonica (Rice)).